Here is a 217-residue protein sequence, read N- to C-terminus: NAD(P)H-quinone oxidoreductase subunit M, chloroplastic (217 aa).

The transit peptide at 1-21 directs the protein to the chloroplast; it reads MVAAFSYTACTKLSLLHPSMV. The disordered stretch occupies residues 48-67; the sequence is ETETLKEEQSTEKMKKQPTP. Positions 50–62 are enriched in basic and acidic residues; that stretch reads ETLKEEQSTEKMK.

This sequence belongs to the NDH complex subunit M family. In terms of assembly, part of the chloroplast NDH complex, composed of a mixture of chloroplast and nucleus encoded subunits. Component of the NDH subcomplex A, at least composed of ndhH, ndhI, ndhJ, ndhK, ndhL, ndhM, ndhN and ndhO.

It is found in the plastid. The protein resides in the chloroplast thylakoid membrane. The enzyme catalyses a plastoquinone + NADH + (n+1) H(+)(in) = a plastoquinol + NAD(+) + n H(+)(out). It catalyses the reaction a plastoquinone + NADPH + (n+1) H(+)(in) = a plastoquinol + NADP(+) + n H(+)(out). Functionally, NDH shuttles electrons from NAD(P)H:plastoquinone, via FMN and iron-sulfur (Fe-S) centers, to quinones in the photosynthetic chain and possibly in a chloroplast respiratory chain. The immediate electron acceptor for the enzyme in this species is believed to be plastoquinone. Couples the redox reaction to proton translocation, and thus conserves the redox energy in a proton gradient. This chain is NAD(P)H-quinone oxidoreductase subunit M, chloroplastic, found in Arabidopsis thaliana (Mouse-ear cress).